The following is a 639-amino-acid chain: MARIDSAVSSSQVYADGESSSARYTRTLSGARSALFTLLIAIALVFTVEVIVRWSWPDTVAYFADPMRPAWTTVAVFFLAMLGVDALFGREHKAALLIAPLAVVPAFISQQKQVFLSDPLYPTDFLFGRQIMELMPVLVKDRPWTAVGVVAGLIAAIVVGALLLRFAWQNFPKLTRRERLMRIAFALPLLVAFWNIMDYNQFSWIRDRLRVIPIMWDQTENYRHNGFALAFAINLPMANVNAPAGYMADAIDRIPVKPLPAGTTHRGKPDVIVLMSESFWDPTRLPKVKLTPDPMPTIRELQGGNVFSPEFGGMTANVEFEALTGFSNAFLPYGSIPYQQYIRNPIPSLATFFRGEGYVSRAIHPFQGWFWNRTAVYKAFGFDMFRSEENMPAMQKRGIFASDESLTKEIIRQADEVEDPFFFFAVTLQGHGPYEANRYAKNTIKVEGDLPEADRQVLATYAQGVKEADDSLKMLMDWAKERDRETIIVLFGDHLPPLNTVYSSTGYMKGITAERKGPKDQMKAEHETPLVVWSNKTGPKKNIGTISPAFLSYQILKQAGYEHPYYTGFLGKVYDHYRVLDRYMLIRKNGKDVADWLRQPKVPASLRDYRFLQHDMMFGKRYSTERFFKSHAELYSAGL.

A run of 6 helical transmembrane segments spans residues 34–54 (ALFTLLIAIALVFTVEVIVRW), 69–89 (PAWTTVAVFFLAMLGVDALFG), 96–116 (LLIAPLAVVPAFISQQKQVFL), 144–164 (WTAVGVVAGLIAAIVVGALLL), 185–205 (FALPLLVAFWNIMDYNQFSWI), and 227–247 (FALAFAINLPMANVNAPAGYM).

Its subcellular location is the cell membrane. This chain is Putative cyclic beta-1,2-glucan modification protein (cgmA), found in Rhizobium meliloti (strain 1021) (Ensifer meliloti).